The chain runs to 426 residues: Enolase (426 aa).

Q163 provides a ligand contact to (2R)-2-phosphoglycerate. E205 functions as the Proton donor in the catalytic mechanism. Mg(2+) is bound by residues D242, E283, and D310. (2R)-2-phosphoglycerate-binding residues include K335, R364, S365, and K386. Residue K335 is the Proton acceptor of the active site.

Belongs to the enolase family. The cofactor is Mg(2+).

The protein resides in the cytoplasm. The protein localises to the secreted. It is found in the cell surface. It catalyses the reaction (2R)-2-phosphoglycerate = phosphoenolpyruvate + H2O. The protein operates within carbohydrate degradation; glycolysis; pyruvate from D-glyceraldehyde 3-phosphate: step 4/5. Its function is as follows. Catalyzes the reversible conversion of 2-phosphoglycerate (2-PG) into phosphoenolpyruvate (PEP). It is essential for the degradation of carbohydrates via glycolysis. The chain is Enolase from Clavibacter sepedonicus (Clavibacter michiganensis subsp. sepedonicus).